Reading from the N-terminus, the 632-residue chain is tRNA uridine 5-carboxymethylaminomethyl modification enzyme MnmG (632 aa).

FAD is bound by residues 13 to 18 (GGGHAG), V125, and S180. NAD(+) is bound at residue 273–287 (GPRYCPSIEDKVVRF). Residue Q370 coordinates FAD.

This sequence belongs to the MnmG family. In terms of assembly, homodimer. Heterotetramer of two MnmE and two MnmG subunits. Requires FAD as cofactor.

The protein resides in the cytoplasm. Functionally, NAD-binding protein involved in the addition of a carboxymethylaminomethyl (cmnm) group at the wobble position (U34) of certain tRNAs, forming tRNA-cmnm(5)s(2)U34. This is tRNA uridine 5-carboxymethylaminomethyl modification enzyme MnmG from Nitrosospira multiformis (strain ATCC 25196 / NCIMB 11849 / C 71).